The following is a 102-amino-acid chain: Large ribosomal subunit protein bL21 (102 aa).

The protein belongs to the bacterial ribosomal protein bL21 family. Part of the 50S ribosomal subunit. Contacts protein L20.

In terms of biological role, this protein binds to 23S rRNA in the presence of protein L20. This is Large ribosomal subunit protein bL21 from Lachnospira eligens (strain ATCC 27750 / DSM 3376 / VPI C15-48 / C15-B4) (Eubacterium eligens).